A 240-amino-acid polypeptide reads, in one-letter code: Tetrahydromethanopterin S-methyltransferase subunit A (240 aa).

Residues 1–216 are Cytoplasmic-facing; that stretch reads MADKKAPASG…DAALIAKFNS (216 aa). His85 contributes to the 5-hydroxybenzimidazolylcob(I)amide binding site. Residues 217-234 form a helical membrane-spanning segment; the sequence is GYYNGKIQGIAIGLFLSL. At 235–240 the chain is on the extracellular side; the sequence is LIFSLL.

This sequence belongs to the MtrA family. As to quaternary structure, the complex is composed of 8 subunits; MtrA, MtrB, MtrC, MtrD, MtrE, MtrF, MtrG and MtrH. Requires 5-hydroxybenzimidazolylcob(I)amide as cofactor.

The protein resides in the cell membrane. It carries out the reaction 5-methyl-5,6,7,8-tetrahydromethanopterin + coenzyme M + 2 Na(+)(in) = 5,6,7,8-tetrahydromethanopterin + methyl-coenzyme M + 2 Na(+)(out). It functions in the pathway one-carbon metabolism; methanogenesis from CO(2); methyl-coenzyme M from 5,10-methylene-5,6,7,8-tetrahydromethanopterin: step 2/2. Part of a complex that catalyzes the formation of methyl-coenzyme M and tetrahydromethanopterin from coenzyme M and methyl-tetrahydromethanopterin. This is an energy-conserving, sodium-ion translocating step. The polypeptide is Tetrahydromethanopterin S-methyltransferase subunit A (Methanococcus aeolicus (strain ATCC BAA-1280 / DSM 17508 / OCM 812 / Nankai-3)).